The primary structure comprises 190 residues: Translation initiation factor IF-3 (190 aa).

It belongs to the IF-3 family. Monomer.

The protein resides in the cytoplasm. In terms of biological role, IF-3 binds to the 30S ribosomal subunit and shifts the equilibrium between 70S ribosomes and their 50S and 30S subunits in favor of the free subunits, thus enhancing the availability of 30S subunits on which protein synthesis initiation begins. The chain is Translation initiation factor IF-3 from Prochlorococcus marinus subsp. pastoris (strain CCMP1986 / NIES-2087 / MED4).